The sequence spans 222 residues: ATP synthase F(0) complex subunit a (222 aa).

6 helical membrane-spanning segments follow: residues 7-27 (AFFD…AILL), 64-84 (WSLM…LGLL), 93-113 (QLTV…ILGF), 132-152 (FLIP…PVTL), 160-180 (ITAG…LLSI), and 185-205 (ITVT…VALI).

It belongs to the ATPase A chain family. In terms of assembly, component of the ATP synthase complex composed at least of ATP5F1A/subunit alpha, ATP5F1B/subunit beta, ATP5MC1/subunit c (homooctomer), MT-ATP6/subunit a, MT-ATP8/subunit 8, ATP5ME/subunit e, ATP5MF/subunit f, ATP5MG/subunit g, ATP5MK/subunit k, ATP5MJ/subunit j, ATP5F1C/subunit gamma, ATP5F1D/subunit delta, ATP5F1E/subunit epsilon, ATP5PF/subunit F6, ATP5PB/subunit b, ATP5PD/subunit d, ATP5PO/subunit OSCP. ATP synthase complex consists of a soluble F(1) head domain (subunits alpha(3) and beta(3)) - the catalytic core - and a membrane F(0) domain - the membrane proton channel (subunits c, a, 8, e, f, g, k and j). These two domains are linked by a central stalk (subunits gamma, delta, and epsilon) rotating inside the F1 region and a stationary peripheral stalk (subunits F6, b, d, and OSCP). Interacts with DNAJC30; interaction is direct.

The protein resides in the mitochondrion inner membrane. It catalyses the reaction H(+)(in) = H(+)(out). In terms of biological role, subunit a, of the mitochondrial membrane ATP synthase complex (F(1)F(0) ATP synthase or Complex V) that produces ATP from ADP in the presence of a proton gradient across the membrane which is generated by electron transport complexes of the respiratory chain. ATP synthase complex consist of a soluble F(1) head domain - the catalytic core - and a membrane F(1) domain - the membrane proton channel. These two domains are linked by a central stalk rotating inside the F(1) region and a stationary peripheral stalk. During catalysis, ATP synthesis in the catalytic domain of F(1) is coupled via a rotary mechanism of the central stalk subunits to proton translocation. With the subunit c (ATP5MC1), forms the proton-conducting channel in the F(0) domain, that contains two crucial half-channels (inlet and outlet) that facilitate proton movement from the mitochondrial intermembrane space (IMS) into the matrix. Protons are taken up via the inlet half-channel and released through the outlet half-channel, following a Grotthuss mechanism. This chain is ATP synthase F(0) complex subunit a, found in Mammuthus primigenius (Siberian woolly mammoth).